The sequence spans 286 residues: Phosphatidylserine decarboxylase proenzyme (286 aa).

Catalysis depends on charge relay system; for autoendoproteolytic cleavage activity residues Asp90, His147, and Ser252. Residue Ser252 is the Schiff-base intermediate with substrate; via pyruvic acid; for decarboxylase activity of the active site. Pyruvic acid (Ser); by autocatalysis is present on Ser252.

The protein belongs to the phosphatidylserine decarboxylase family. PSD-B subfamily. Prokaryotic type I sub-subfamily. Heterodimer of a large membrane-associated beta subunit and a small pyruvoyl-containing alpha subunit. Requires pyruvate as cofactor. In terms of processing, is synthesized initially as an inactive proenzyme. Formation of the active enzyme involves a self-maturation process in which the active site pyruvoyl group is generated from an internal serine residue via an autocatalytic post-translational modification. Two non-identical subunits are generated from the proenzyme in this reaction, and the pyruvate is formed at the N-terminus of the alpha chain, which is derived from the carboxyl end of the proenzyme. The autoendoproteolytic cleavage occurs by a canonical serine protease mechanism, in which the side chain hydroxyl group of the serine supplies its oxygen atom to form the C-terminus of the beta chain, while the remainder of the serine residue undergoes an oxidative deamination to produce ammonia and the pyruvoyl prosthetic group on the alpha chain. During this reaction, the Ser that is part of the protease active site of the proenzyme becomes the pyruvoyl prosthetic group, which constitutes an essential element of the active site of the mature decarboxylase.

It is found in the cell membrane. It catalyses the reaction a 1,2-diacyl-sn-glycero-3-phospho-L-serine + H(+) = a 1,2-diacyl-sn-glycero-3-phosphoethanolamine + CO2. Its pathway is phospholipid metabolism; phosphatidylethanolamine biosynthesis; phosphatidylethanolamine from CDP-diacylglycerol: step 2/2. In terms of biological role, catalyzes the formation of phosphatidylethanolamine (PtdEtn) from phosphatidylserine (PtdSer). The sequence is that of Phosphatidylserine decarboxylase proenzyme from Pseudomonas fluorescens (strain Pf0-1).